The primary structure comprises 275 residues: MKKYKRLLLMAGLVTLVFVLSACGTAPVSESSTGIWDRYIVYYFAQAIKFLSLGGSVGIGIILFTLVIRIILLPLMHFQTKSMRKTQELQPQLKALQQKYSSKDPETQRLFREEQQRLYAENNVNPYIGCLPLLVQLPIMMALYQAISRVPELKEGTFLWLSLDKPDPYLILPILAAVFTFASTYLSSMSQLETNASLKIMNYVMPAMIFFMGISLASSLSLYWVVSNAFQTGQTLLLNNPFKIRKEREEAARQAKARERALERAKSPKKKGKKK.

The first 22 residues, 1–22 (MKKYKRLLLMAGLVTLVFVLSA), serve as a signal peptide directing secretion. C23 is lipidated: N-palmitoyl cysteine. The S-diacylglycerol cysteine moiety is linked to residue C23. The next 4 membrane-spanning stretches (helical) occupy residues 53–73 (LGGS…IILL), 127–147 (YIGC…YQAI), 169–189 (YLIL…LSSM), and 206–226 (PAMI…YWVV). Over residues 249 to 266 (EEAARQAKARERALERAK) the composition is skewed to basic and acidic residues. Residues 249-275 (EEAARQAKARERALERAKSPKKKGKKK) are disordered.

Belongs to the OXA1/ALB3/YidC family. Type 2 subfamily.

Its subcellular location is the cell membrane. Its function is as follows. Required for the insertion and/or proper folding and/or complex formation of integral membrane proteins into the membrane. Involved in integration of membrane proteins that insert both dependently and independently of the Sec translocase complex, as well as at least some lipoproteins. The protein is Membrane protein insertase YidC of Enterococcus faecalis (strain ATCC 700802 / V583).